Reading from the N-terminus, the 323-residue chain is Galactosylgalactosylxylosylprotein 3-beta-glucuronosyltransferase 2 (323 aa).

Topologically, residues 1–2 (MK) are cytoplasmic. Residues 3-23 (SALFTRFFILLPWILIVIIML) traverse the membrane as a helical; Signal-anchor for type II membrane protein segment. Topologically, residues 24 to 323 (DVDTRRPVPP…YHLDTVKIEV (300 aa)) are lumenal. The disordered stretch occupies residues 51–80 (RLPLRRGGPAHGTQKRNQSRPQPQPEPQLP). The N-linked (GlcNAc...) asparagine glycan is linked to Asn67. Residues 87-89 (PTY), Asp118, Arg155, Arg160, and 185-187 (DDD) contribute to the UDP-alpha-D-glucuronate site. Mn(2+) is bound at residue Asp187. An interaction with galactose moiety of substrate glycoprotein region spans residues 234 to 243 (WRADRPFAID). The active-site Proton donor/acceptor is Glu273. Asn292 carries N-linked (GlcNAc...) asparagine glycosylation. Residue 300 to 302 (HTR) participates in UDP-alpha-D-glucuronate binding.

The protein belongs to the glycosyltransferase 43 family. In terms of assembly, homodimer. Mn(2+) serves as cofactor. In terms of tissue distribution, expressed in the trachea, retina, spinal cord, hippocampus and other brain regions, and, at lower levels, in testis and ovary.

It is found in the golgi apparatus membrane. It carries out the reaction 3-O-(beta-D-galactosyl-(1-&gt;3)-beta-D-galactosyl-(1-&gt;4)-beta-D-xylosyl)-L-seryl-[protein] + UDP-alpha-D-glucuronate = 3-O-(beta-D-GlcA-(1-&gt;3)-beta-D-Gal-(1-&gt;3)-beta-D-Gal-(1-&gt;4)-beta-D-Xyl)-L-seryl-[protein] + UDP + H(+). The protein operates within protein modification; protein glycosylation. Functionally, involved in the biosynthesis of L2/HNK-1 carbohydrate epitope on both glycolipids and glycoproteins. The polypeptide is Galactosylgalactosylxylosylprotein 3-beta-glucuronosyltransferase 2 (B3GAT2) (Homo sapiens (Human)).